Here is a 177-residue protein sequence, read N- to C-terminus: N5-carboxyaminoimidazole ribonucleotide mutase (177 aa).

Positions 18, 21, and 48 each coordinate substrate.

It belongs to the AIR carboxylase family. Class I subfamily.

It catalyses the reaction 5-carboxyamino-1-(5-phospho-D-ribosyl)imidazole + H(+) = 5-amino-1-(5-phospho-D-ribosyl)imidazole-4-carboxylate. Its pathway is purine metabolism; IMP biosynthesis via de novo pathway; 5-amino-1-(5-phospho-D-ribosyl)imidazole-4-carboxylate from 5-amino-1-(5-phospho-D-ribosyl)imidazole (N5-CAIR route): step 2/2. Its function is as follows. Catalyzes the conversion of N5-carboxyaminoimidazole ribonucleotide (N5-CAIR) to 4-carboxy-5-aminoimidazole ribonucleotide (CAIR). The sequence is that of N5-carboxyaminoimidazole ribonucleotide mutase from Pyrococcus horikoshii (strain ATCC 700860 / DSM 12428 / JCM 9974 / NBRC 100139 / OT-3).